A 186-amino-acid polypeptide reads, in one-letter code: Pyridoxal 5'-phosphate synthase subunit PdxT (186 aa).

Position 47-49 (47-49 (GES)) interacts with L-glutamine. Cys-76 acts as the Nucleophile in catalysis. Residues Arg-102 and 130–131 (IR) each bind L-glutamine. Catalysis depends on charge relay system residues His-166 and Glu-168.

Belongs to the glutaminase PdxT/SNO family. In terms of assembly, in the presence of PdxS, forms a dodecamer of heterodimers. Only shows activity in the heterodimer.

The enzyme catalyses aldehydo-D-ribose 5-phosphate + D-glyceraldehyde 3-phosphate + L-glutamine = pyridoxal 5'-phosphate + L-glutamate + phosphate + 3 H2O + H(+). The catalysed reaction is L-glutamine + H2O = L-glutamate + NH4(+). It functions in the pathway cofactor biosynthesis; pyridoxal 5'-phosphate biosynthesis. Its function is as follows. Catalyzes the hydrolysis of glutamine to glutamate and ammonia as part of the biosynthesis of pyridoxal 5'-phosphate. The resulting ammonia molecule is channeled to the active site of PdxS. This is Pyridoxal 5'-phosphate synthase subunit PdxT from Staphylococcus epidermidis (strain ATCC 35984 / DSM 28319 / BCRC 17069 / CCUG 31568 / BM 3577 / RP62A).